The following is a 556-amino-acid chain: Polyphenol oxidase 2 (556 aa).

6 residues coordinate Cu cation: His57, His81, His90, His250, His254, and His282. The 2'-(S-cysteinyl)-histidine (Cys-His) cross-link spans 79-81; sequence CTH. His254 contacts substrate. Residues 379–556 constitute a propeptide, removed in mature form; that stretch reads SKPSSGARNT…FDDVAVHVIN (178 aa).

Belongs to the tyrosinase family. Heterotetramer. The cofactor is Cu(2+). In terms of processing, the C-ter is probably cleaved after Gly-378 since the mature active protein is smaller than the protein encoded by the gene.

The catalysed reaction is 2 L-dopa + O2 = 2 L-dopaquinone + 2 H2O. It carries out the reaction L-tyrosine + O2 = L-dopaquinone + H2O. Functionally, copper-containing oxidase that catalyzes both the o-hydroxylation of monophenols and the subsequent oxidation of the resulting o-diphenols into reactive o-quinones, which evolve spontaneously to produce intermediates, which associate in dark brown pigments. Involved in the initial step of melanin synthesis. Melanins constitute a mechanism of defense and resistance to stress such as UV radiations, free radicals, gamma rays, dehydratation and extreme temperatures, and contribute to the fungal cell-wall resistance against hydrolytic enzymes in avoiding cellular lysis. Fungal pigments are also involved in the formation and stability of spores. This chain is Polyphenol oxidase 2 (PPO2), found in Agaricus bisporus (White button mushroom).